Consider the following 115-residue polypeptide: ER exit protein (115 aa).

It belongs to the STEEP1 family.

In terms of biological role, may stimulate membrane curvature formation and subsequent endoplasmic reticulum exit site (ERES) establishment. In Schizosaccharomyces pombe (strain 972 / ATCC 24843) (Fission yeast), this protein is ER exit protein.